The sequence spans 353 residues: Tectonin-2 (353 aa).

Residues 44–93 (WIFDNDGYIRLAANHNLVLDVNGGAAKEGNTVLSYPDKKDHAKNQLWVNK) enclose the Ricin B-type lectin domain. 6 tandem repeats follow at residues 138–173 (SAWE…HWDG), 174–210 (SKWH…DRGT), 211–247 (NKWS…NADS), 248–282 (NSWT…HYNG), 283–318 (NSWD…LKHG), and 319–353 (KDWE…KALL). A 6 X approximate tandem repeats region spans residues 138–353 (SAWERHEGEL…SAHNIYKALL (216 aa)).

This sequence belongs to the tectonin family.

The protein localises to the cell surface. It localises to the cytoplasmic vesicle membrane. Its function is as follows. Probably involved in bacterial recognition. May be a lectin that function as part of a transmembrane signaling complex during phagocytosis. The sequence is that of Tectonin-2 (TECB) from Physarum polycephalum (Slime mold).